The chain runs to 304 residues: 2-oxoacid:ferredoxin oxidoreductase 2, subunit beta (304 aa).

[4Fe-4S] cluster is bound by residues cysteine 12, cysteine 15, and cysteine 46. Residues 44–47 (IGCS) and histidine 65 each bind thiamine diphosphate. Aspartate 90 provides a ligand contact to Mg(2+). Residue 91 to 92 (GD) participates in thiamine diphosphate binding. Mg(2+) is bound by residues asparagine 118 and valine 120. 122-123 (GL) contacts thiamine diphosphate. Position 197 (cysteine 197) interacts with [4Fe-4S] cluster.

In terms of assembly, heterodimer composed of an alpha and a beta subunit. Requires [4Fe-4S] cluster as cofactor. The cofactor is thiamine diphosphate. Mg(2+) serves as cofactor.

It carries out the reaction a 2-oxocarboxylate + 2 oxidized [2Fe-2S]-[ferredoxin] + CoA = an acyl-CoA + 2 reduced [2Fe-2S]-[ferredoxin] + CO2 + H(+). Functionally, catalyzes the coenzyme A-dependent oxidative decarboxylation of different 2-oxoacids such as 2-oxoglutarate, pyruvate and 2-oxobutyrate to form their CoA derivatives. This Sulfurisphaera tokodaii (strain DSM 16993 / JCM 10545 / NBRC 100140 / 7) (Sulfolobus tokodaii) protein is 2-oxoacid:ferredoxin oxidoreductase 2, subunit beta.